Reading from the N-terminus, the 78-residue chain is Acyl carrier protein (78 aa).

The region spanning 2–77 (STIEERVKKI…AAIDYVKAHQ (76 aa)) is the Carrier domain. At Ser-37 the chain carries O-(pantetheine 4'-phosphoryl)serine.

Belongs to the acyl carrier protein (ACP) family. 4'-phosphopantetheine is transferred from CoA to a specific serine of apo-ACP by AcpS. This modification is essential for activity because fatty acids are bound in thioester linkage to the sulfhydryl of the prosthetic group.

It is found in the cytoplasm. It functions in the pathway lipid metabolism; fatty acid biosynthesis. Carrier of the growing fatty acid chain in fatty acid biosynthesis. The chain is Acyl carrier protein from Pseudomonas putida (strain ATCC 700007 / DSM 6899 / JCM 31910 / BCRC 17059 / LMG 24140 / F1).